Here is a 506-residue protein sequence, read N- to C-terminus: AAA-ATPase At4g25835 (506 aa).

An N-terminal signal peptide occupies residues 1–20 (MKEYWTSLASLLGVLAFCQS). 244–251 (GPPGTGKS) is a binding site for ATP. Residues 462–506 (GKSRVQNVSLEEQENRAFDSLYAEENGGEEEEIEDNICKSSDDCS) are disordered. Residues 487 to 496 (NGGEEEEIED) are compositionally biased toward acidic residues. Residues 497–506 (NICKSSDDCS) are compositionally biased toward basic and acidic residues.

This sequence belongs to the AAA ATPase family. BCS1 subfamily. Mg(2+) is required as a cofactor.

It carries out the reaction ATP + H2O = ADP + phosphate + H(+). The polypeptide is AAA-ATPase At4g25835 (Arabidopsis thaliana (Mouse-ear cress)).